A 108-amino-acid polypeptide reads, in one-letter code: Small ribosomal subunit protein uS17 (108 aa).

The protein belongs to the universal ribosomal protein uS17 family. In terms of assembly, part of the 30S ribosomal subunit.

One of the primary rRNA binding proteins, it binds specifically to the 5'-end of 16S ribosomal RNA. The chain is Small ribosomal subunit protein uS17 from Methanocorpusculum labreanum (strain ATCC 43576 / DSM 4855 / Z).